The following is a 94-amino-acid chain: DNA-directed RNA polymerase subunit omega (94 aa).

It belongs to the RNA polymerase subunit omega family. The RNAP catalytic core consists of 2 alpha, 1 beta, 1 beta' and 1 omega subunit. When a sigma factor is associated with the core the holoenzyme is formed, which can initiate transcription.

The catalysed reaction is RNA(n) + a ribonucleoside 5'-triphosphate = RNA(n+1) + diphosphate. In terms of biological role, promotes RNA polymerase assembly. Latches the N- and C-terminal regions of the beta' subunit thereby facilitating its interaction with the beta and alpha subunits. The protein is DNA-directed RNA polymerase subunit omega of Bifidobacterium animalis subsp. lactis (strain AD011).